Here is a 298-residue protein sequence, read N- to C-terminus: GTPase Era (298 aa).

One can recognise an Era-type G domain in the interval 3–170 (KSGFVAILGR…IKLLTDNLEE (168 aa)). A G1 region spans residues 11–18 (GRPNVGKS). 11-18 (GRPNVGKS) provides a ligand contact to GTP. The G2 stretch occupies residues 37 to 41 (QTTRN). Residues 58 to 61 (DTPG) form a G3 region. GTP is bound by residues 58-62 (DTPGI) and 120-123 (NKID). Positions 120–123 (NKID) are G4. The tract at residues 149 to 151 (ISA) is G5. Residues 201 to 279 (TQQEVPHSVA…YLETWVKVKK (79 aa)) form the KH type-2 domain.

It belongs to the TRAFAC class TrmE-Era-EngA-EngB-Septin-like GTPase superfamily. Era GTPase family. Monomer.

Its subcellular location is the cytoplasm. The protein localises to the cell membrane. Its function is as follows. An essential GTPase that binds both GDP and GTP, with rapid nucleotide exchange. Plays a role in 16S rRNA processing and 30S ribosomal subunit biogenesis and possibly also in cell cycle regulation and energy metabolism. In Streptococcus pyogenes serotype M3 (strain ATCC BAA-595 / MGAS315), this protein is GTPase Era.